The sequence spans 94 residues: Small ribosomal subunit protein bS6 (94 aa).

It belongs to the bacterial ribosomal protein bS6 family.

Functionally, binds together with bS18 to 16S ribosomal RNA. The chain is Small ribosomal subunit protein bS6 from Fusobacterium nucleatum subsp. nucleatum (strain ATCC 25586 / DSM 15643 / BCRC 10681 / CIP 101130 / JCM 8532 / KCTC 2640 / LMG 13131 / VPI 4355).